The chain runs to 143 residues: Cytochrome c-type biogenesis protein CcmE (143 aa).

The Cytoplasmic portion of the chain corresponds to 1-8; sequence MNPVRRRK. Residues 9–29 form a helical; Signal-anchor for type II membrane protein membrane-spanning segment; that stretch reads LFILLFALTILSAAAALVLYA. At 30–143 the chain is on the periplasmic side; the sequence is LRQNISLFYT…KSALADKVKQ (114 aa). Residues His-124 and Tyr-128 each coordinate heme.

It belongs to the CcmE/CycJ family.

Its subcellular location is the cell inner membrane. Its function is as follows. Heme chaperone required for the biogenesis of c-type cytochromes. Transiently binds heme delivered by CcmC and transfers the heme to apo-cytochromes in a process facilitated by CcmF and CcmH. The chain is Cytochrome c-type biogenesis protein CcmE from Legionella pneumophila (strain Corby).